A 609-amino-acid chain; its full sequence is Albumin (609 aa).

An N-terminal signal peptide occupies residues 1–18; the sequence is MKWVTFISLLFLFSSAYS. A propeptide spanning residues 19-24 is cleaved from the precursor; it reads RGVFRR. 3 Albumin domains span residues 19–210, 211–403, and 404–601; these read RGVF…DELR, DEGK…EFKP, and LVEE…KLVA. His27 provides a ligand contact to Cu cation. The residue at position 29 (Ser29) is a Phosphoserine; by FAM20C. Glu30 is a binding site for Ca(2+). A glycan (N-linked (Glc) (glycation) lysine) is linked at Lys36. Residue Asp37 coordinates Ca(2+). A glycan (N-linked (Glc) (glycation) lysine; in vitro) is linked at Lys75. A disulfide bridge connects residues Cys77 and Cys86. Ser82 and Ser89 each carry phosphoserine; by FAM20C. Residue His91 participates in Zn(2+) binding. 4 cysteine pairs are disulfide-bonded: Cys99–Cys115, Cys114–Cys125, Cys148–Cys193, and Cys192–Cys201. Thr107 carries the post-translational modification Phosphothreonine; by FAM20C. N-linked (Glc) (glycation) lysine; in vitro glycans are attached at residues Lys161 and Lys186. Residue Lys223 is glycosylated (N-linked (Glc) (glycation) lysine; in vitro). Disulfide bonds link Cys224–Cys270 and Cys269–Cys277. Position 229 is an N6-succinyllysine (Lys229). A glycan (N-linked (Glc) (glycation) lysine; in vitro) is linked at Lys249. A glycan (N-linked (Glc) (glycation) lysine) is linked at Lys257. Residue Lys264 coordinates (4Z,15Z)-bilirubin IXalpha. Glu268 provides a ligand contact to Ca(2+). The Zn(2+) site is built by His271 and Asp273. Asp273, Glu276, Asp279, and Asp283 together coordinate Ca(2+). Disulfide bonds link Cys289–Cys303 and Cys302–Cys313. Phosphoserine is present on Ser297. Lys300 carries N-linked (Glc) (glycation) lysine; in vitro glycosylation. N-linked (Glc) (glycation) lysine glycosylation occurs at Lys305. Lys337 is a glycosylation site (N-linked (Glc) (glycation) lysine; in vitro). Disulfide bonds link Cys340–Cys385 and Cys384–Cys393. Lys341 carries N-linked (Glc) (glycation) lysine glycosylation. An N-linked (GlcNAc...) asparagine; in variant Redhill glycan is attached at Asn342. N-linked (Glc) (glycation) lysine; in vitro glycosylation occurs at Lys347. An N-linked (Glc) (glycation) lysine glycan is attached at Lys375. N-linked (Glc) (glycation) lysine; in vitro glycans are attached at residues Lys402 and Lys437. Cystine bridges form between Cys416-Cys462, Cys461-Cys472, Cys485-Cys501, and Cys500-Cys511. Ser443 is modified (phosphoserine). Thr444 and Thr446 each carry phosphothreonine. Lys460 is subject to N6-succinyllysine. The N-linked (Glc) (glycation) lysine glycan is linked to Lys463. Lys468 carries an N-linked (Glc) (glycation) lysine; in vitro glycan. Phosphoserine is present on Ser513. Asp518 is a glycosylation site (N-linked (GlcNAc...) asparagine; in variant Casebrook). Intrachain disulfides connect Cys538–Cys583 and Cys582–Cys591. Lys543 is subject to N6-succinyllysine. A glycan (N-linked (Glc) (glycation) lysine) is linked at Lys549. N6-methyllysine; alternate is present on Lys558. Lys558 carries N-linked (Glc) (glycation) lysine; alternate glycosylation. Residues Lys560 and Lys569 are each glycosylated (N-linked (Glc) (glycation) lysine; in vitro). Position 588 is an N6-succinyllysine (Lys588). Lys597 is a glycosylation site (N-linked (Glc) (glycation) lysine; in vitro).

The protein belongs to the ALB/AFP/VDB family. Interacts with FCGRT; this interaction regulates ALB homeostasis. Interacts with TASOR. In plasma, occurs in a covalently-linked complex with chromophore-bound alpha-1-microglobulin with molar ratio 1:2 and 1:1; this interaction does not prevent fatty acid binding to ALB. Post-translationally, kenitra variant is partially O-glycosylated at Thr-620. It has two new disulfide bonds Cys-600 to Cys-602 and Cys-601 to Cys-606. Glycated in diabetic patients. In terms of processing, phosphorylated by FAM20C in the extracellular medium. Post-translationally, acetylated on Lys-223 by acetylsalicylic acid. Plasma.

The protein resides in the secreted. Binds water, Ca(2+), Na(+), K(+), fatty acids, hormones, bilirubin and drugs. Its main function is the regulation of the colloidal osmotic pressure of blood. Major zinc transporter in plasma, typically binds about 80% of all plasma zinc. Major calcium and magnesium transporter in plasma, binds approximately 45% of circulating calcium and magnesium in plasma. Potentially has more than two calcium-binding sites and might additionally bind calcium in a non-specific manner. The shared binding site between zinc and calcium at residue Asp-273 suggests a crosstalk between zinc and calcium transport in the blood. The rank order of affinity is zinc &gt; calcium &gt; magnesium. Binds to the bacterial siderophore enterobactin and inhibits enterobactin-mediated iron uptake of E.coli from ferric transferrin, and may thereby limit the utilization of iron and growth of enteric bacteria such as E.coli. Does not prevent iron uptake by the bacterial siderophore aerobactin. The protein is Albumin (ALB) of Homo sapiens (Human).